A 103-amino-acid chain; its full sequence is Small ubiquitin-related modifier 3 (103 aa).

Glycyl lysine isopeptide (Lys-Gly) (interchain with G-Cter in SUMO2) cross-links involve residues Lys-5 and Lys-7. Lys-11 participates in a covalent cross-link: Glycyl lysine isopeptide (Lys-Gly) (interchain with G-Cter in SUMO); alternate. Residue Lys-11 forms a Glycyl lysine isopeptide (Lys-Gly) (interchain with G-Cter in SUMO2); alternate linkage. Residues 15–92 (DHINLKVAGQ…IDVFQQQTGG (78 aa)) enclose the Ubiquitin-like domain. Gly-92 is covalently cross-linked (Glycyl lysine isopeptide (Gly-Lys) (interchain with K-? in acceptor proteins)). Residues 93–103 (VPESSLAGHSF) constitute a propeptide that is removed on maturation.

It belongs to the ubiquitin family. SUMO subfamily. Covalently attached to a number of proteins. Interacts with BMAL1. Interacts with USP25 (via ts SIM domain); the interaction sumoylates USP25 and inhibits its ubiquitin hydrolyzing activity. Interacts with SAE2 and UBE2I. In terms of processing, polymeric chains can be formed through Lys-11 cross-linking. Post-translationally, cleavage of precursor form by SENP1, SENP2 or SENP5 is necessary for function. Expressed predominantly in liver.

It localises to the cytoplasm. The protein localises to the nucleus. The protein resides in the PML body. Functionally, ubiquitin-like protein which can be covalently attached to target lysines either as a monomer or as a lysine-linked polymer. Does not seem to be involved in protein degradation and may function as an antagonist of ubiquitin in the degradation process. Plays a role in a number of cellular processes such as nuclear transport, DNA replication and repair, mitosis and signal transduction. Covalent attachment to its substrates requires prior activation by the E1 complex SAE1-SAE2 and linkage to the E2 enzyme UBE2I, and can be promoted by an E3 ligase such as PIAS1-4, RANBP2 or CBX4. Plays a role in the regulation of sumoylation status of SETX. This chain is Small ubiquitin-related modifier 3, found in Homo sapiens (Human).